The following is a 79-amino-acid chain: CDC42 small effector protein 1 (79 aa).

2 S-palmitoyl cysteine lipidation sites follow: Cys-10 and Cys-11. One can recognise a CRIB domain in the interval 30-43 (IGEPMNFVHLTHIG). The tract at residues 48 to 79 (GAGDGLAMTGAVQEQMRSKGNRDRPWSNSRGL) is disordered. The span at 63 to 72 (MRSKGNRDRP) shows a compositional bias: basic and acidic residues.

It belongs to the CDC42SE/SPEC family. As to quaternary structure, interacts with CDC42 (in GTP-bound form). Interacts weakly with RAC1 and not at all with RHOA.

Its subcellular location is the cytoplasm. It localises to the cytoskeleton. The protein resides in the cell membrane. In terms of biological role, probably involved in the organization of the actin cytoskeleton by acting downstream of CDC42, inducing actin filament assembly. Alters CDC42-induced cell shape changes. In activated T-cells, may play a role in CDC42-mediated F-actin accumulation at the immunological synapse. May play a role in early contractile events in phagocytosis in macrophages. The protein is CDC42 small effector protein 1 (CDC42SE1) of Pongo abelii (Sumatran orangutan).